The sequence spans 87 residues: uncharacterized protein (87 aa).

The signal sequence occupies residues 1-26; the sequence is MMSTQHFILSLTILIIISNLHDEVNA. Intrachain disulfides connect Cys61–Cys75, Cys68–Cys79, and Cys74–Cys84.

The protein localises to the secreted. This is an uncharacterized protein from Schistosoma japonicum (Blood fluke).